The following is a 424-amino-acid chain: Imidazolonepropionase (424 aa).

Fe(3+) contacts are provided by H84 and H86. Residues H84 and H86 each coordinate Zn(2+). R93, Y156, and H189 together coordinate 4-imidazolone-5-propanoate. Position 156 (Y156) interacts with N-formimidoyl-L-glutamate. H254 is a Fe(3+) binding site. H254 is a Zn(2+) binding site. E257 is a binding site for 4-imidazolone-5-propanoate. Fe(3+) is bound at residue D328. Residue D328 participates in Zn(2+) binding. Positions 330 and 332 each coordinate N-formimidoyl-L-glutamate. S333 contributes to the 4-imidazolone-5-propanoate binding site.

Belongs to the metallo-dependent hydrolases superfamily. HutI family. Zn(2+) is required as a cofactor. The cofactor is Fe(3+).

It is found in the cytoplasm. The enzyme catalyses 4-imidazolone-5-propanoate + H2O = N-formimidoyl-L-glutamate. It functions in the pathway amino-acid degradation; L-histidine degradation into L-glutamate; N-formimidoyl-L-glutamate from L-histidine: step 3/3. Functionally, catalyzes the hydrolytic cleavage of the carbon-nitrogen bond in imidazolone-5-propanoate to yield N-formimidoyl-L-glutamate. It is the third step in the universal histidine degradation pathway. The chain is Imidazolonepropionase from Geobacillus sp. (strain WCH70).